Reading from the N-terminus, the 203-residue chain is CASP-like protein 4B2 (203 aa).

At 1-57 the chain is on the cytoplasmic side; sequence MAMVTADASAAADAATKQPDVEKDYSSYNGASTAGAGGGGVVESVVARWRREDMLDK. A helical membrane pass occupies residues 58–78; it reads CPLALHAAAAAFAFVALVLVA. The Extracellular segment spans residues 79–92; the sequence is SNQHGDWMQFDRYQ. The chain crosses the membrane as a helical span at residues 93-113; that stretch reads EYMYLLAIAALAFAYSLAQAL. Over 114 to 135 the chain is Cytoplasmic; sequence RHAHRMRGGADPIPAPSARLFD. Residues 136 to 156 traverse the membrane as a helical segment; that stretch reads FIADQVVAYLLMSALSAAIPI. Residues 157–171 lie on the Extracellular side of the membrane; sequence TNRMRTAVINNFTDA. Residue Asn-167 is glycosylated (N-linked (GlcNAc...) asparagine). The helical transmembrane segment at 172-192 threads the bilayer; sequence TAAAISMAFLAFVALALSATV. At 193 to 203 the chain is on the cytoplasmic side; it reads SGYKLSRQMYM.

Belongs to the Casparian strip membrane proteins (CASP) family. As to quaternary structure, homodimer and heterodimers.

Its subcellular location is the cell membrane. This is CASP-like protein 4B2 from Hordeum vulgare subsp. vulgare (Domesticated barley).